A 101-amino-acid chain; its full sequence is Urease subunit beta (101 aa).

The protein belongs to the urease beta subunit family. In terms of assembly, heterotrimer of UreA (gamma), UreB (beta) and UreC (alpha) subunits. Three heterotrimers associate to form the active enzyme.

It localises to the cytoplasm. The enzyme catalyses urea + 2 H2O + H(+) = hydrogencarbonate + 2 NH4(+). It functions in the pathway nitrogen metabolism; urea degradation; CO(2) and NH(3) from urea (urease route): step 1/1. The sequence is that of Urease subunit beta from Cupriavidus metallidurans (strain ATCC 43123 / DSM 2839 / NBRC 102507 / CH34) (Ralstonia metallidurans).